The chain runs to 495 residues: N-succinylglutamate 5-semialdehyde dehydrogenase (495 aa).

220–225 (GSAGTG) provides a ligand contact to NAD(+). Active-site residues include Glu-243 and Cys-277.

It belongs to the aldehyde dehydrogenase family. AstD subfamily.

It catalyses the reaction N-succinyl-L-glutamate 5-semialdehyde + NAD(+) + H2O = N-succinyl-L-glutamate + NADH + 2 H(+). It participates in amino-acid degradation; L-arginine degradation via AST pathway; L-glutamate and succinate from L-arginine: step 4/5. Catalyzes the NAD-dependent reduction of succinylglutamate semialdehyde into succinylglutamate. The polypeptide is N-succinylglutamate 5-semialdehyde dehydrogenase (Enterobacter sp. (strain 638)).